The chain runs to 297 residues: Protoheme IX farnesyltransferase (297 aa).

9 helical membrane-spanning segments follow: residues 26 to 46, 48 to 68, 96 to 116, 120 to 140, 147 to 167, 174 to 194, 218 to 238, 243 to 263, and 276 to 296; these read VTQL…PGMV, YPVL…AFAV, FHII…LWNF, LTMW…TWLL, NIVI…AAVT, AWLL…ALAL, LLNI…PYIY, IIYL…VIAL, and FRFS…DHYF.

This sequence belongs to the UbiA prenyltransferase family. Protoheme IX farnesyltransferase subfamily.

It localises to the cell membrane. It carries out the reaction heme b + (2E,6E)-farnesyl diphosphate + H2O = Fe(II)-heme o + diphosphate. The protein operates within porphyrin-containing compound metabolism; heme O biosynthesis; heme O from protoheme: step 1/1. Converts heme B (protoheme IX) to heme O by substitution of the vinyl group on carbon 2 of heme B porphyrin ring with a hydroxyethyl farnesyl side group. The protein is Protoheme IX farnesyltransferase of Polynucleobacter asymbioticus (strain DSM 18221 / CIP 109841 / QLW-P1DMWA-1) (Polynucleobacter necessarius subsp. asymbioticus).